A 354-amino-acid chain; its full sequence is Uroporphyrinogen decarboxylase (354 aa).

Substrate-binding positions include 27–31 (RQAGR), Asp-77, Tyr-154, Thr-209, and His-327.

Belongs to the uroporphyrinogen decarboxylase family. Homodimer.

It localises to the cytoplasm. The enzyme catalyses uroporphyrinogen III + 4 H(+) = coproporphyrinogen III + 4 CO2. It functions in the pathway porphyrin-containing compound metabolism; protoporphyrin-IX biosynthesis; coproporphyrinogen-III from 5-aminolevulinate: step 4/4. Functionally, catalyzes the decarboxylation of four acetate groups of uroporphyrinogen-III to yield coproporphyrinogen-III. This is Uroporphyrinogen decarboxylase from Salmonella newport (strain SL254).